A 138-amino-acid chain; its full sequence is Small ribosomal subunit protein uS11c (138 aa).

The segment at 1–22 (MAKPIPRIGSQRNRRINSRKNA) is disordered. Positions 12 to 22 (RNRRINSRKNA) are enriched in basic residues.

It belongs to the universal ribosomal protein uS11 family. In terms of assembly, part of the 30S ribosomal subunit.

The protein localises to the plastid. Its subcellular location is the chloroplast. In Fagopyrum esculentum subsp. ancestrale (Wild buckwheat), this protein is Small ribosomal subunit protein uS11c.